The primary structure comprises 650 residues: Glycoprotein antigen BM86 (650 aa).

A signal peptide spans 1–19 (MRGIALFVAAVSLIVEGTA). EGF-like domains lie at 20–66 (ESSI…KQCE) and 67–104 (YKDTCKTRECSYGRCVESNPSKASCVCEASDDLTLQCK). 6 disulfide bridges follow: Cys-24–Cys-37, Cys-32–Cys-49, Cys-51–Cys-65, Cys-71–Cys-81, Cys-76–Cys-91, and Cys-93–Cys-103. Asn-141 and Asn-182 each carry an N-linked (GlcNAc...) asparagine glycan. EGF-like domains are found at residues 205 to 247 (CINA…ITCK), 251 to 292 (HTVS…DTCI), and 291 to 335 (CISD…NECL). 9 disulfides stabilise this stretch: Cys-209/Cys-222, Cys-218/Cys-231, Cys-233/Cys-246, Cys-255/Cys-269, Cys-263/Cys-278, Cys-280/Cys-291, Cys-295/Cys-307, Cys-300/Cys-316, and Cys-318/Cys-334. Asn-348 and Asn-382 each carry an N-linked (GlcNAc...) asparagine glycan. EGF-like domains are found at residues 482–530 (RRSV…IGCI) and 531–568 (ERTTCNPKEIQECQDKKLECVYKNHKAECECPDDHECY). 6 disulfides stabilise this stretch: Cys-486–Cys-500, Cys-492–Cys-516, Cys-518–Cys-529, Cys-535–Cys-550, Cys-543–Cys-559, and Cys-561–Cys-567. Residues 603-628 (KSEATTAATTTTKAKDKDPDPGKSSA) are disordered. Residue Ser-627 is the site of GPI-anchor amidated serine attachment. Positions 628–650 (AAAVSATGLLLLLAATSVTAASL) are cleaved as a propeptide — removed in mature form.

The protein localises to the cell membrane. This is Glycoprotein antigen BM86 from Rhipicephalus microplus (Cattle tick).